The sequence spans 145 residues: Transcription antitermination protein NusB (145 aa).

Belongs to the NusB family.

Functionally, involved in transcription antitermination. Required for transcription of ribosomal RNA (rRNA) genes. Binds specifically to the boxA antiterminator sequence of the ribosomal RNA (rrn) operons. This chain is Transcription antitermination protein NusB, found in Ruminiclostridium cellulolyticum (strain ATCC 35319 / DSM 5812 / JCM 6584 / H10) (Clostridium cellulolyticum).